The following is a 375-amino-acid chain: Growth/differentiation factor 8 (375 aa).

Positions 1 to 18 (MQKLQIFVYIYLFMLLVA) are cleaved as a signal peptide. Residues 19–266 (GPVDLNENSE…VTDTPKRSRR (248 aa)) constitute a propeptide that is removed on maturation. 2 N-linked (GlcNAc...) asparagine glycosylation sites follow: Asn48 and Asn71. 4 disulfides stabilise this stretch: Cys272–Cys282, Cys281–Cys340, Cys309–Cys372, and Cys313–Cys374.

The protein belongs to the TGF-beta family. Homodimer; disulfide-linked. Interacts with WFIKKN2, leading to inhibit its activity. Interacts with FSTL3. Post-translationally, synthesized as large precursor molecule that undergoes proteolytic cleavage to generate an N-terminal propeptide and a disulfide linked C-terminal dimer, which is the biologically active molecule. The circulating form consists of a latent complex of the C-terminal dimer and other proteins, including its propeptide, which maintain the C-terminal dimer in a latent, inactive state. Ligand activation requires additional cleavage of the prodomain by a tolloid-like metalloproteinase.

The protein localises to the secreted. Acts specifically as a negative regulator of skeletal muscle growth. The chain is Growth/differentiation factor 8 (MSTN) from Capra ibex (Ibex).